A 459-amino-acid chain; its full sequence is Sorting nexin-8 (459 aa).

Residues 1-53 (MTGGAMDPLPTAPGAAAAEAEVDEEADPPAADSPVPPVSEPRAPDAGQMQVPP) form a disordered region. Positions 68 to 176 (ARDAVQVELV…KLFLSFSGPD (109 aa)) constitute a PX domain. A 1,2-diacyl-sn-glycero-3-phospho-(1D-myo-inositol-3-phosphate) contacts are provided by arginine 104, lysine 130, and arginine 143.

Belongs to the sorting nexin family.

The protein localises to the early endosome membrane. May be involved in several stages of intracellular trafficking. May play a role in intracellular protein transport from early endosomes to the trans-Golgi network. This Bos taurus (Bovine) protein is Sorting nexin-8 (SNX8).